The following is a 626-amino-acid chain: Phosphomethylpyrimidine synthase (626 aa).

Substrate is bound by residues Asn-237, Met-266, Tyr-295, His-331, 351–353 (SRG), 392–395 (DGLR), and Glu-431. A Zn(2+)-binding site is contributed by His-435. Tyr-458 is a substrate binding site. His-499 provides a ligand contact to Zn(2+). [4Fe-4S] cluster is bound by residues Cys-579, Cys-582, and Cys-587.

It belongs to the ThiC family. As to quaternary structure, homodimer. The cofactor is [4Fe-4S] cluster.

The enzyme catalyses 5-amino-1-(5-phospho-beta-D-ribosyl)imidazole + S-adenosyl-L-methionine = 4-amino-2-methyl-5-(phosphooxymethyl)pyrimidine + CO + 5'-deoxyadenosine + formate + L-methionine + 3 H(+). The protein operates within cofactor biosynthesis; thiamine diphosphate biosynthesis. Its function is as follows. Catalyzes the synthesis of the hydroxymethylpyrimidine phosphate (HMP-P) moiety of thiamine from aminoimidazole ribotide (AIR) in a radical S-adenosyl-L-methionine (SAM)-dependent reaction. This chain is Phosphomethylpyrimidine synthase, found in Cupriavidus pinatubonensis (strain JMP 134 / LMG 1197) (Cupriavidus necator (strain JMP 134)).